The chain runs to 62 residues: Alpha-conotoxin-like S1.1 (62 aa).

An N-terminal signal peptide occupies residues 1-21; sequence MGMRMMFTVFLLVVLAITVVS. The propeptide occupies 22–48; it reads FPLDRESDGANAEARTHDHEKHALDRN. 2 cysteine pairs are disulfide-bonded: C50–C56 and C51–C61. Position 61 is a cysteine amide (C61).

This sequence belongs to the conotoxin A superfamily. In terms of tissue distribution, expressed by the venom duct.

The protein resides in the secreted. Its function is as follows. Alpha-conotoxins act on postsynaptic membranes, they bind to the nicotinic acetylcholine receptors (nAChR) and thus inhibit them. This is Alpha-conotoxin-like S1.1 from Conus striatus (Striated cone).